A 143-amino-acid polypeptide reads, in one-letter code: Large ribosomal subunit protein uL15 (143 aa).

Positions 1-58 (MQLNDLRSAPGARREKHRPGRGIGSGLGKTGGRGHKGQTSRSGGSIAPGFEGGQQPLH) are disordered. The segment covering 21 to 31 (RGIGSGLGKTG) has biased composition (gly residues).

Belongs to the universal ribosomal protein uL15 family. As to quaternary structure, part of the 50S ribosomal subunit.

In terms of biological role, binds to the 23S rRNA. The chain is Large ribosomal subunit protein uL15 from Ectopseudomonas mendocina (strain ymp) (Pseudomonas mendocina).